Here is a 128-residue protein sequence, read N- to C-terminus: EPIDERMAL PATTERNING FACTOR-like protein 2 (128 aa).

Positions 1–28 are cleaved as a signal peptide; sequence MVWSSNMSSFLLILLILNSTHFSLMANG. Intrachain disulfides connect cysteine 60–cysteine 119, cysteine 65–cysteine 71, and cysteine 68–cysteine 121. Polar residues predominate over residues 79–90; the sequence is NPQTKLHSPLTT. Residues 79–100 form a disordered region; the sequence is NPQTKLHSPLTTSSSSSSETIH.

Belongs to the plant cysteine rich small secretory peptide family. Epidermal patterning factor subfamily.

It is found in the secreted. In terms of biological role, controls stomatal patterning. The sequence is that of EPIDERMAL PATTERNING FACTOR-like protein 2 from Arabidopsis thaliana (Mouse-ear cress).